Here is a 34-residue protein sequence, read N- to C-terminus: Cytochrome b6-f complex subunit 7 (34 aa).

Residues 9-29 (ALLSFGLIFVGWALGALLLKI) traverse the membrane as a helical segment.

Belongs to the PetM family. The 4 large subunits of the cytochrome b6-f complex are cytochrome b6, subunit IV (17 kDa polypeptide, PetD), cytochrome f and the Rieske protein, while the 4 small subunits are PetG, PetL, PetM and PetN. The complex functions as a dimer.

Its subcellular location is the cellular thylakoid membrane. Component of the cytochrome b6-f complex, which mediates electron transfer between photosystem II (PSII) and photosystem I (PSI), cyclic electron flow around PSI, and state transitions. This chain is Cytochrome b6-f complex subunit 7, found in Nostoc sp. (strain PCC 7120 / SAG 25.82 / UTEX 2576).